Consider the following 542-residue polypeptide: Chaperonin GroEL 2 (542 aa).

ATP is bound by residues 30–33, Lys-51, 87–91, Gly-415, and Asp-496; these read TLGP and DGTTT.

Belongs to the chaperonin (HSP60) family. As to quaternary structure, forms a cylinder of 14 subunits composed of two heptameric rings stacked back-to-back. Interacts with the co-chaperonin GroES.

The protein localises to the cytoplasm. The enzyme catalyses ATP + H2O + a folded polypeptide = ADP + phosphate + an unfolded polypeptide.. Functionally, together with its co-chaperonin GroES, plays an essential role in assisting protein folding. The GroEL-GroES system forms a nano-cage that allows encapsulation of the non-native substrate proteins and provides a physical environment optimized to promote and accelerate protein folding. This is Chaperonin GroEL 2 from Cereibacter sphaeroides (strain ATCC 17023 / DSM 158 / JCM 6121 / CCUG 31486 / LMG 2827 / NBRC 12203 / NCIMB 8253 / ATH 2.4.1.) (Rhodobacter sphaeroides).